We begin with the raw amino-acid sequence, 213 residues long: ATP synthase peripheral stalk subunit OSCP, mitochondrial (213 aa).

A mitochondrion-targeting transit peptide spans 1–23; that stretch reads MAAPAVSGLSRQVRCFSTSVVRP. Positions 5-23 match the SIFI-degron motif; it reads AVSGLSRQVRCFSTSVVRP. 4 positions are modified to N6-acetyllysine: K54, K60, K70, and K73. K90 carries the post-translational modification N6-succinyllysine. An N6-acetyllysine; alternate mark is found at K158 and K162. N6-succinyllysine; alternate occurs at positions 158 and 162. Residues K172, K176, and K192 each carry the N6-acetyllysine modification. The residue at position 199 (K199) is an N6-succinyllysine.

The protein belongs to the ATPase delta chain family. As to quaternary structure, component of the ATP synthase complex composed at least of ATP5F1A/subunit alpha, ATP5F1B/subunit beta, ATP5MC1/subunit c (homooctomer), MT-ATP6/subunit a, MT-ATP8/subunit 8, ATP5ME/subunit e, ATP5MF/subunit f, ATP5MG/subunit g, ATP5MK/subunit k, ATP5MJ/subunit j, ATP5F1C/subunit gamma, ATP5F1D/subunit delta, ATP5F1E/subunit epsilon, ATP5PF/subunit F6, ATP5PB/subunit b, ATP5PD/subunit d, ATP5PO/subunit OSCP. ATP synthase complex consists of a soluble F(1) head domain (subunits alpha(3) and beta(3)) - the catalytic core - and a membrane F(0) domain - the membrane proton channel (subunits c, a, 8, e, f, g, k and j). These two domains are linked by a central stalk (subunits gamma, delta, and epsilon) rotating inside the F1 region and a stationary peripheral stalk (subunits F6, b, d, and OSCP). Acetylation at Lys-162 decreases ATP production. Deacetylated by SIRT3. Post-translationally, in response to mitochondrial stress, the precursor protein is ubiquitinated by the SIFI complex in the cytoplasm before mitochondrial import, leading to its degradation. Within the SIFI complex, UBR4 initiates ubiquitin chain that are further elongated or branched by KCMF1.

It localises to the mitochondrion. The protein resides in the mitochondrion inner membrane. Subunit OSCP, of the mitochondrial membrane ATP synthase complex (F(1)F(0) ATP synthase or Complex V) that produces ATP from ADP in the presence of a proton gradient across the membrane which is generated by electron transport complexes of the respiratory chain. ATP synthase complex consist of a soluble F(1) head domain - the catalytic core - and a membrane F(1) domain - the membrane proton channel. These two domains are linked by a central stalk rotating inside the F(1) region and a stationary peripheral stalk. During catalysis, ATP synthesis in the catalytic domain of F(1) is coupled via a rotary mechanism of the central stalk subunits to proton translocation. In vivo, can only synthesize ATP although its ATP hydrolase activity can be activated artificially in vitro. Part of the complex F(0) domain. Part of the complex F(0) domain and the peripheric stalk, which acts as a stator to hold the catalytic alpha(3)beta(3) subcomplex and subunit a/ATP6 static relative to the rotary elements. In Homo sapiens (Human), this protein is ATP synthase peripheral stalk subunit OSCP, mitochondrial.